Reading from the N-terminus, the 348-residue chain is Histidinol-phosphate aminotransferase (348 aa).

A disordered region spans residues methionine 1–asparagine 31. Residues glutamate 18 to asparagine 31 show a composition bias toward polar residues. Lysine 207 is modified (N6-(pyridoxal phosphate)lysine).

The protein belongs to the class-II pyridoxal-phosphate-dependent aminotransferase family. Histidinol-phosphate aminotransferase subfamily. As to quaternary structure, homodimer. The cofactor is pyridoxal 5'-phosphate.

The catalysed reaction is L-histidinol phosphate + 2-oxoglutarate = 3-(imidazol-4-yl)-2-oxopropyl phosphate + L-glutamate. The protein operates within amino-acid biosynthesis; L-histidine biosynthesis; L-histidine from 5-phospho-alpha-D-ribose 1-diphosphate: step 7/9. This is Histidinol-phosphate aminotransferase from Microcystis aeruginosa (strain NIES-843 / IAM M-2473).